The sequence spans 435 residues: Methylenetetrahydrofolate--tRNA-(uracil-5-)-methyltransferase TrmFO (435 aa).

9–14 contacts FAD; it reads GGGLAG.

Belongs to the MnmG family. TrmFO subfamily. It depends on FAD as a cofactor.

The protein resides in the cytoplasm. It catalyses the reaction uridine(54) in tRNA + (6R)-5,10-methylene-5,6,7,8-tetrahydrofolate + NADH + H(+) = 5-methyluridine(54) in tRNA + (6S)-5,6,7,8-tetrahydrofolate + NAD(+). The enzyme catalyses uridine(54) in tRNA + (6R)-5,10-methylene-5,6,7,8-tetrahydrofolate + NADPH + H(+) = 5-methyluridine(54) in tRNA + (6S)-5,6,7,8-tetrahydrofolate + NADP(+). Catalyzes the folate-dependent formation of 5-methyl-uridine at position 54 (M-5-U54) in all tRNAs. This Geobacter sp. (strain M21) protein is Methylenetetrahydrofolate--tRNA-(uracil-5-)-methyltransferase TrmFO.